Consider the following 294-residue polypeptide: Beta-lactamase SME-1 (294 aa).

The first 27 residues, 1-27 (MSNKVNFKTASFLFSVCLALSAFNAHA), serve as a signal peptide directing secretion. Cysteines 72 and 242 form a disulfide. Ser-73 functions as the Nucleophile; acyl-ester intermediate in the catalytic mechanism. Positions 73, 76, 133, and 135 each coordinate a beta-lactam. The active-site Proton acceptor is the Glu-172. A beta-lactam is bound at residue Thr-239.

It belongs to the class-A beta-lactamase family.

The catalysed reaction is a beta-lactam + H2O = a substituted beta-amino acid. With respect to regulation, partially inhibited by the beta-lactamase-blocking agents, clavulanic acid and tazobactam. Not inhibited by EDTA. Its function is as follows. Class A beta-lactamase which confers resistance to the beta-lactam antibiotics, including penicillins, some cephalosporins and carbapenems, to JM109 strain E.coli. Acts via hydrolysis of the beta-lactam ring. Has penicillin-, cephalosporin- and carbapenem-hydrolyzing activities. This is Beta-lactamase SME-1 from Serratia marcescens.